Consider the following 360-residue polypeptide: Histidinol-phosphate aminotransferase (360 aa).

Residue Lys-222 is modified to N6-(pyridoxal phosphate)lysine.

It belongs to the class-II pyridoxal-phosphate-dependent aminotransferase family. Histidinol-phosphate aminotransferase subfamily. In terms of assembly, homodimer. The cofactor is pyridoxal 5'-phosphate.

It catalyses the reaction L-histidinol phosphate + 2-oxoglutarate = 3-(imidazol-4-yl)-2-oxopropyl phosphate + L-glutamate. It participates in amino-acid biosynthesis; L-histidine biosynthesis; L-histidine from 5-phospho-alpha-D-ribose 1-diphosphate: step 7/9. The chain is Histidinol-phosphate aminotransferase from Listeria welshimeri serovar 6b (strain ATCC 35897 / DSM 20650 / CCUG 15529 / CIP 8149 / NCTC 11857 / SLCC 5334 / V8).